Consider the following 148-residue polypeptide: Angiogenin-1 (148 aa).

A signal peptide spans 1–23 (MVMVLSPLLLVFILGLGLTPVAP). Histidine 37 (proton acceptor) is an active-site residue. A tRNA-binding site is contributed by arginine 45. 3 disulfides stabilise this stretch: cysteine 50–cysteine 105, cysteine 63–cysteine 116, and cysteine 81–cysteine 131. Residues 55 to 59 (KNRRL) carry the Nucleolar localization signal motif. TRNA is bound by residues cysteine 105 and isoleucine 127. Histidine 138 serves as the catalytic Proton donor.

It belongs to the pancreatic ribonuclease family. As to quaternary structure, homodimer. Interacts with RNH1; inhibiting ANG ribonuclease activity. As to expression, serum and milk.

It localises to the secreted. Its subcellular location is the nucleus. It is found in the nucleolus. The protein resides in the cytoplasm. The protein localises to the stress granule. Secreted ribonuclease that can either promote or restrict cell proliferation of target cells, depending on the context. Endocytosed in target cells via its receptor PLXNB2 and translocates to the cytoplasm or nucleus. Under stress conditions, localizes to the cytoplasm and promotes the assembly of stress granules (SGs): specifically cleaves a subset of tRNAs within anticodon loops to produce tRNA-derived stress-induced fragments (tiRNAs), resulting in translation repression and inhibition of cell proliferation. tiRNas also prevent formation of apoptosome, thereby promoting cell survival. Preferentially cleaves RNAs between a pyrimidine and an adenosine residue, suggesting that it cleaves the anticodon loop of tRNA(Ala) (32-UUAGCAU-38) after positions 33 and 36. Cleaves a subset of tRNAs, including tRNA(Ala), tRNA(Glu), tRNA(Gly), tRNA(Lys), tRNA(Val), tRNA(His), tRNA(Asp) and tRNA(Sec). Under growth conditions and in differentiated cells, translocates to the nucleus and stimulates ribosomal RNA (rRNA) transcription, including that containing the initiation site sequences of 45S rRNA, thereby promoting cell growth and proliferation. Angiogenin induces vascularization of normal and malignant tissues via its ability to promote rRNA transcription. The polypeptide is Angiogenin-1 (ANG1) (Bos taurus (Bovine)).